We begin with the raw amino-acid sequence, 322 residues long: MRVVFFGTPEFALPSLQILLQPQSPFEVVGLVCQPDRPQGRGQKVLPPPTKILAQAHGIPVWQPGRLRRDPEVLAALEALAADVFVVVAYGQILPPAVLQMPKLGCINVHASLLPAYRGAAPIQWAIANGETETGVTTMLMDEGMDTGAILLQAKLPIEPEQTGLELASQLAQRGAELLVETLVKLEKGELTPIPQDDSRATYAPLLKKQDFQLDWQRPAQALHNQIRAFSPDCFTGLQGQRIKIVRSAAPQLHPPPAELPPGSPGEVVGLARGEGVYVATGEGSLLIRRAQLPGRKEQSACDLVNGGQLRVGMRFEVLPDP.

A (6S)-5,6,7,8-tetrahydrofolate-binding site is contributed by 112 to 115; it reads SLLP.

This sequence belongs to the Fmt family.

The enzyme catalyses L-methionyl-tRNA(fMet) + (6R)-10-formyltetrahydrofolate = N-formyl-L-methionyl-tRNA(fMet) + (6S)-5,6,7,8-tetrahydrofolate + H(+). Functionally, attaches a formyl group to the free amino group of methionyl-tRNA(fMet). The formyl group appears to play a dual role in the initiator identity of N-formylmethionyl-tRNA by promoting its recognition by IF2 and preventing the misappropriation of this tRNA by the elongation apparatus. The sequence is that of Methionyl-tRNA formyltransferase from Synechococcus sp. (strain JA-3-3Ab) (Cyanobacteria bacterium Yellowstone A-Prime).